The chain runs to 465 residues: uncharacterized protein (465 aa).

Disordered stretches follow at residues 1–55, 70–164, and 221–313; these read MNSS…SSHQ, DFSE…VEGQ, and TTDN…KQRV. Residues 40-50 show a composition bias toward basic and acidic residues; the sequence is ENYKDNSDHSN. Residues 73–82 are compositionally biased toward polar residues; sequence ESFNDNQNLK. Over residues 83–134 the composition is skewed to low complexity; that stretch reads NFNTTDNNFNDDYNNDYDSNNDSNNDSNNDSNNDYDNESNNYFNNDSNNDSN. Residues 141 to 150 show a composition bias toward basic and acidic residues; that stretch reads ETTKHKLPIE. A compositionally biased stretch (low complexity) spans 221 to 235; the sequence is TTDNQSNTESSQENN. 2 stretches are compositionally biased toward basic and acidic residues: residues 236-249 and 259-275; these read VIKKEPNNKLDKQP and IVPKQETDKKSPVKSIK. Polar residues predominate over residues 288-306; it reads IDQSNKLGKSYNTNNNNSK. The stretch at 390 to 423 forms a coiled coil; the sequence is NKASIAELKKMRLEQRKREIEEKRRQVENKKPDS.

This is an uncharacterized protein from Acanthamoeba polyphaga mimivirus (APMV).